The sequence spans 113 residues: U11-theraphotoxin-Hhn1f (113 aa).

The first 21 residues, 1-21, serve as a signal peptide directing secretion; that stretch reads MNTVRVTFLLVFVLAVSLGQA. Residues 22 to 74 constitute a propeptide that is removed on maturation; that stretch reads DKDENRMEMQEKTEQGKSYLDFAENLLLQKLEELEAKLLEEDSEESRNSRQKR. A disordered region spans residues 61–83; sequence EEDSEESRNSRQKRCIGEGVPCD. 3 disulfides stabilise this stretch: Cys75–Cys90, Cys82–Cys95, and Cys89–Cys110.

The protein belongs to the neurotoxin 14 (magi-1) family. 01 (HNTX-16) subfamily. As to expression, expressed by the venom gland.

Its subcellular location is the secreted. Probable ion channel inhibitor. The protein is U11-theraphotoxin-Hhn1f of Cyriopagopus hainanus (Chinese bird spider).